The following is an 898-amino-acid chain: MLSAALLLLPGLPLAGAGATEEPTQESGPLGEPPPGLALFRWQWHEVEAPYLVALWILVASLAKIVFHLSRKVTSLVPESCLLILLGLVLGGIVLAVAKKAEYQLEPGTFFLFLLPPIVLDSGYFMPSRLFFDNLGAILTYAVVGTLWNAFTTGVALWGLQQAGLVAPRVQAGLLDFLLFGSLISAVDPVAVLAVFEEVHVNQTLFIIIFGESLLNDAVTVVLYKVCNSFVEMGSANVQATDYLKGVASLFVVSLGGAAVGLVFAFLLALTTRFTKRVRIIEPLLVFLLAYAAYLTAEMASLSAILAVTMCGLGCKKYVEANISHKSRTAVKYTMKTLASCAETVIFMLLGISAVDSSKWAWDSGLVLGTLFFILFFRALGVVLQTWALNQFRLVPLDKIDQVVMSYGGLRGAVAFALVILLDRTKVPAKDYFVATTIVVVFFTVIVQGLTIKPLVKWLRVKRSDYHKPTLNQELHEHTFDHILAAVEDVVGHHGYHYWRDRWEQFDKKYLSQLLMRRSAYRIRDQIWDVYYRLNIRDAISFVDQGGHVLSSTGLTLPSMPSRNSVAETSVTNLLRESGSGACLDLQVIDTVRSGRDREDAVMHHLLCGGLYKPRRRYKASCGRHFISEDAQERQDKEIFQQNMKRRLESFKSTKHNICFTKSKPRPRKTSHKKKDGVANPEATNGKPPRDLGFQDTAAVILTVESEEEEESDSSETEKEDDEGIIFVARATSEVLQEGKVSGSLEVCPSPRIIPPSPTCAEKELPWKSGQGDLAVYVSSETTKIVPVDMQTGWNQSISSLESLASPPCTQPPTLTRLPPHPLVTEEPQVPIDLSSDPRSSFAFPPSLAKAGRSRSESSADIPQQELQPLMGHKDHTHLSPGTANSHWCIQFNRGGRL.

Residues 1–48 (MLSAALLLLPGLPLAGAGATEEPTQESGPLGEPPPGLALFRWQWHEVE) lie on the Cytoplasmic side of the membrane. A helical transmembrane segment spans residues 49–69 (APYLVALWILVASLAKIVFHL). Residues 70 to 76 (SRKVTSL) are Extracellular-facing. A helical transmembrane segment spans residues 77–97 (VPESCLLILLGLVLGGIVLAV). Residues 98–106 (AKKAEYQLE) lie on the Cytoplasmic side of the membrane. The chain crosses the membrane as a helical span at residues 107–127 (PGTFFLFLLPPIVLDSGYFMP). The Extracellular portion of the chain corresponds to 128–137 (SRLFFDNLGA). Residues 138 to 158 (ILTYAVVGTLWNAFTTGVALW) traverse the membrane as a helical segment. Over 159–176 (GLQQAGLVAPRVQAGLLD) the chain is Cytoplasmic. The helical transmembrane segment at 177–197 (FLLFGSLISAVDPVAVLAVFE) threads the bilayer. Residues 198-203 (EVHVNQ) are Extracellular-facing. A helical transmembrane segment spans residues 204-224 (TLFIIIFGESLLNDAVTVVLY). Residues 225–249 (KVCNSFVEMGSANVQATDYLKGVAS) are Cytoplasmic-facing. The chain crosses the membrane as a helical span at residues 250–270 (LFVVSLGGAAVGLVFAFLLAL). At 271–279 (TTRFTKRVR) the chain is on the extracellular side. The chain crosses the membrane as a helical span at residues 280 to 300 (IIEPLLVFLLAYAAYLTAEMA). The Cytoplasmic segment spans residues 301-334 (SLSAILAVTMCGLGCKKYVEANISHKSRTAVKYT). A helical transmembrane segment spans residues 335-355 (MKTLASCAETVIFMLLGISAV). Residues 356-363 (DSSKWAWD) lie on the Extracellular side of the membrane. A helical transmembrane segment spans residues 364–384 (SGLVLGTLFFILFFRALGVVL). The Cytoplasmic segment spans residues 385–401 (QTWALNQFRLVPLDKID). Residues 402–422 (QVVMSYGGLRGAVAFALVILL) form a helical membrane-spanning segment. Residues 423–431 (DRTKVPAKD) are Extracellular-facing. The helical transmembrane segment at 432–452 (YFVATTIVVVFFTVIVQGLTI) threads the bilayer. Topologically, residues 453 to 898 (KPLVKWLRVK…CIQFNRGGRL (446 aa)) are cytoplasmic. Disordered stretches follow at residues 660–693 (FTKS…RDLG) and 826–866 (EEPQ…PQQE). A compositionally biased stretch (basic residues) spans 663 to 675 (SKPRPRKTSHKKK). Residues 857 to 866 (ESSADIPQQE) show a composition bias toward polar residues.

Belongs to the monovalent cation:proton antiporter 1 (CPA1) transporter (TC 2.A.36) family. In terms of assembly, interacts with CHP1 and CHP2. Interacts with ARRB2; facilitates the endocytosis of SLC9A5 from the plasma membrane. Interacts with RACK1; this interaction positively regulates SLC9A5 activity and promote SLC9A5 localization to focal adhesions. Interacts with SCAMP2; this interaction regulates SLC9A5 cell-surface targeting and SLC9A5 activity. Phosphorylated by PRKAA2; promotes its accumulation at the cell surface. Phosphorylated by CSNK2A1 in a manner favoring its beta-arrestin binding and endocytosis. As to expression, highest expression level is detected in brain. Expressed in hippocampal neurons (at protein level).

It is found in the cell membrane. The protein resides in the recycling endosome membrane. It localises to the cell projection. The protein localises to the dendritic spine membrane. Its subcellular location is the synaptic cell membrane. It is found in the cell junction. The protein resides in the focal adhesion. It catalyses the reaction Na(+)(in) + H(+)(out) = Na(+)(out) + H(+)(in). Functionally, plasma membrane Na(+)/H(+) antiporter. Mediates the electroneutral exchange of intracellular H(+) ions for extracellular Na(+) in 1:1 stoichiometry. Responsible for regulating intracellular pH homeostasis, in particular in neural tissues. Acts as a negative regulator of dendritic spine growth. Plays a role in postsynaptic remodeling and signaling. Can also contribute to organellar pH regulation, with consequences for receptor tyrosine kinase trafficking. This Mus musculus (Mouse) protein is Sodium/hydrogen exchanger 5 (Slc9a5).